A 265-amino-acid polypeptide reads, in one-letter code: Very long chain fatty acid elongase 6 (265 aa).

A glycan (N-linked (GlcNAc...) asparagine) is linked at asparagine 2. 7 consecutive transmembrane segments (helical) span residues 34 to 51, 70 to 90, 111 to 131, 137 to 156, 159 to 179, 197 to 217, and 232 to 252; these read FLFS…RHLM, LAVF…YILM, FWAY…IFII, LIFL…WYSY, MVAG…VMYS, FITL…YLVF, and IIWS…FFFE.

It belongs to the ELO family. ELOVL6 subfamily. N-Glycosylated.

It is found in the endoplasmic reticulum membrane. It carries out the reaction a very-long-chain acyl-CoA + malonyl-CoA + H(+) = a very-long-chain 3-oxoacyl-CoA + CO2 + CoA. The catalysed reaction is hexadecanoyl-CoA + malonyl-CoA + H(+) = 3-oxooctadecanoyl-CoA + CO2 + CoA. It catalyses the reaction (9Z)-hexadecenoyl-CoA + malonyl-CoA + H(+) = 3-oxo-(11Z)-octadecenoyl-CoA + CO2 + CoA. The enzyme catalyses dodecanoyl-CoA + malonyl-CoA + H(+) = 3-oxotetradecanoyl-CoA + CO2 + CoA. It carries out the reaction tetradecanoyl-CoA + malonyl-CoA + H(+) = 3-oxohexadecanoyl-CoA + CO2 + CoA. The catalysed reaction is (9Z)-octadecenoyl-CoA + malonyl-CoA + H(+) = 3-oxo-(11Z)-eicosenoyl-CoA + CO2 + CoA. It catalyses the reaction (9Z,12Z)-octadecadienoyl-CoA + malonyl-CoA + H(+) = (11Z,14Z)-3-oxoicosa-11,14-dienoyl-CoA + CO2 + CoA. The enzyme catalyses (9Z,12Z,15Z)-octadecatrienoyl-CoA + malonyl-CoA + H(+) = (11Z,14Z,17Z)-3-oxoeicosatrienoyl-CoA + CO2 + CoA. Its pathway is lipid metabolism; fatty acid biosynthesis. The reaction is stimulated by the presence of HSD17B12, the enzyme catalyzing the second step of the elongation cycle. In terms of biological role, catalyzes the first and rate-limiting reaction of the four reactions that constitute the long-chain fatty acids elongation cycle. This endoplasmic reticulum-bound enzymatic process allows the addition of 2 carbons to the chain of long- and very long-chain fatty acids (VLCFAs) per cycle. Condensing enzyme that elongates fatty acids with 12, 14 and 16 carbons with higher activity toward C16:0 acyl-CoAs. Catalyzes the synthesis of unsaturated C16 long chain fatty acids and, to a lesser extent, C18:0 and those with low desaturation degree. May participate in the production of saturated and monounsaturated VLCFAs of different chain lengths that are involved in multiple biological processes as precursors of membrane lipids and lipid mediators. In Gallus gallus (Chicken), this protein is Very long chain fatty acid elongase 6.